A 480-amino-acid chain; its full sequence is MNVGRTVKVTQAVVDLKFEGELPRIFNALKSKLEYRGKELILEVSQHIGDNIVRCIAMDSTNGVSRNDEFVDTGAPISVPVGRSTLGRIFNVVGEVIDECGPLKGKYDLESIHRVPPSFTEQKIQEEVLVTGIKVIDLLAPYLKGGKIGLFGGAGVGKTVLIMELINNIAKAHKGFSVFAGVGERTREGNDLYHEMITSNVINVNEHEKSQAVLVYGQMNEPPGARARVALTALTMAEYFRDHENQDVLFFVDNIFRFTQAGSEISALLGRMPSAVGYQPTLATDMGAMQERIASTTSGSITSVQAIYVPADDLTDPAPAATFSHLDSTTVLSRQIAEMGIYPAVDPLDSTSQSLSAEIVGEEHYKVTSEVKRILQTYKSLQDIIAILGMDELSDEDKITVDRARKIQKFFSQPFHVAEVFTGMPGKFVSLSDTVSSFKGIVEGEYDHLPEAAFYMVGNIDEAIKKAELIKDETKVGAKS.

152–159 is a binding site for ATP; the sequence is GGAGVGKT.

This sequence belongs to the ATPase alpha/beta chains family. In terms of assembly, F-type ATPases have 2 components, CF(1) - the catalytic core - and CF(0) - the membrane proton channel. CF(1) has five subunits: alpha(3), beta(3), gamma(1), delta(1), epsilon(1). CF(0) has three main subunits: a(1), b(2) and c(9-12). The alpha and beta chains form an alternating ring which encloses part of the gamma chain. CF(1) is attached to CF(0) by a central stalk formed by the gamma and epsilon chains, while a peripheral stalk is formed by the delta and b chains.

Its subcellular location is the cell membrane. The catalysed reaction is ATP + H2O + 4 H(+)(in) = ADP + phosphate + 5 H(+)(out). In terms of biological role, produces ATP from ADP in the presence of a proton gradient across the membrane. The catalytic sites are hosted primarily by the beta subunits. This is ATP synthase subunit beta from Wolbachia sp. subsp. Brugia malayi (strain TRS).